A 125-amino-acid chain; its full sequence is Small ribosomal subunit protein uS12 (125 aa).

Asp-89 bears the 3-methylthioaspartic acid mark.

Belongs to the universal ribosomal protein uS12 family. As to quaternary structure, part of the 30S ribosomal subunit. Contacts proteins S8 and S17. May interact with IF1 in the 30S initiation complex.

Functionally, with S4 and S5 plays an important role in translational accuracy. Interacts with and stabilizes bases of the 16S rRNA that are involved in tRNA selection in the A site and with the mRNA backbone. Located at the interface of the 30S and 50S subunits, it traverses the body of the 30S subunit contacting proteins on the other side and probably holding the rRNA structure together. The combined cluster of proteins S8, S12 and S17 appears to hold together the shoulder and platform of the 30S subunit. This chain is Small ribosomal subunit protein uS12, found in Wigglesworthia glossinidia brevipalpis.